The sequence spans 181 residues: MSRIGKKPIAIPNNVKVSLDGNVLTIEGPKGKLSMPVHEIVNVKIDNNQITVSKNQESPFAQAMHGTTAALIKNTIEGVSKGYSVTLEVVGLGYKAAMKGQELELNLGYSHPIYYKPPAGIKLEVKENKITVSGIDKQLVGQVAAEIIKFRKPDPYKGKGIRYEGQVLKLKPGKSAGKGKK.

The protein belongs to the universal ribosomal protein uL6 family. Part of the 50S ribosomal subunit.

Its function is as follows. This protein binds to the 23S rRNA, and is important in its secondary structure. It is located near the subunit interface in the base of the L7/L12 stalk, and near the tRNA binding site of the peptidyltransferase center. This chain is Large ribosomal subunit protein uL6, found in Hydrogenobaculum sp. (strain Y04AAS1).